Consider the following 273-residue polypeptide: Aquaporin NIP1-4 (273 aa).

The next 2 helical transmembrane spans lie at 59 to 79 (LLAE…AITV) and 86 to 106 (VTFP…VYAV). Residues 115 to 117 (NPA) carry the NPA 1 motif. 3 helical membrane passes run 133–155 (APAY…RLMF), 174–194 (SLVI…AVAT), and 198–218 (AVGH…VLFA). Residues 227–229 (NPA) carry the NPA 2 motif. Residues 245-265 (WVYILGPFAGAAAGAWAYSLI) traverse the membrane as a helical segment.

Belongs to the MIP/aquaporin (TC 1.A.8) family. NIP (TC 1.A.8.12) subfamily. As to expression, expressed in leaves.

The protein localises to the membrane. Functionally, aquaporins facilitate the transport of water and small neutral solutes across cell membranes. The chain is Aquaporin NIP1-4 (NIP1-4) from Oryza sativa subsp. japonica (Rice).